A 359-amino-acid chain; its full sequence is Malonyl-CoA reductase (359 aa).

16 to 19 (TGLV) contacts NADP(+). Catalysis depends on cysteine 153, which acts as the Acyl-thioester intermediate. NADP(+) is bound at residue 183–184 (SG). Histidine 248 functions as the Proton acceptor in the catalytic mechanism. 335–336 (NT) contributes to the NADP(+) binding site.

Belongs to the aspartate-semialdehyde dehydrogenase family. In terms of assembly, homodimer and possibly a tetramer. Mg(2+) serves as cofactor. It depends on Mn(2+) as a cofactor.

The catalysed reaction is 3-oxopropanoate + NADP(+) + CoA = malonyl-CoA + NADPH + H(+). With respect to regulation, activated by dithioerythritol (5 mM) and inhibited by the thiol-blocking agent iodoacetamide (0.1 mM). Functionally, catalyzes the reduction of malonyl-CoA to malonate semialdehyde, a key step in the 3-hydroxypropanoate and the 3-hydroxypropanoate/4-hydroxybutyrate cycles. Can also use succinyl-CoA and succinate semialdehyde as substrates but at a lower rate than malonyl-CoA. In Sulfurisphaera tokodaii (strain DSM 16993 / JCM 10545 / NBRC 100140 / 7) (Sulfolobus tokodaii), this protein is Malonyl-CoA reductase (mcr).